A 235-amino-acid polypeptide reads, in one-letter code: Cobalt transport protein CbiM (235 aa).

The N-terminal stretch at 1–33 is a signal peptide; that stretch reads MRYLKFFLLLVFLVPSFGFSMHIMEGFLPPTHA. Helical transmembrane passes span 34-51, 63-83, 95-115, 118-138, 156-176, and 199-219; these read LIWY…LFTI, MLLA…IPSV, LGAI…VLLF, LLLA…MAIV, NIAV…TTSF, and IFAI…VVVI.

The protein belongs to the CbiM family. Forms an energy-coupling factor (ECF) transporter complex composed of an ATP-binding protein (A component, CbiO), a transmembrane protein (T component, CbiQ) and 2 possible substrate-capture proteins (S components, CbiM and CbiN) of unknown stoichimetry.

Its subcellular location is the cell inner membrane. It participates in cofactor biosynthesis; adenosylcobalamin biosynthesis. Part of the energy-coupling factor (ECF) transporter complex CbiMNOQ involved in cobalt import. In Thermosipho melanesiensis (strain DSM 12029 / CIP 104789 / BI429), this protein is Cobalt transport protein CbiM.